Here is a 295-residue protein sequence, read N- to C-terminus: SPX domain-containing protein 1 (295 aa).

The region spanning 1-166 is the SPX domain; that stretch reads MKFGKSLSSQ…GALIRLPFIQ (166 aa). Positions 197–227 are disordered; the sequence is NELPVSSEDGRGDSTNEDKPSNPSSSLVNGG. Over residues 204–216 the composition is skewed to basic and acidic residues; it reads EDGRGDSTNEDKP.

In terms of assembly, interacts (via SPX domain) with PHR2 (via C-terminus). Interacts with RLI1 in the nucleus to prevents its positive regulation of leaf inclination during phosphate (Pi) starvation.

Its subcellular location is the nucleus. Functionally, involved in plant adaptation to phosphate (Pi) starvation. Inhibits PHR2 DNA-binding activity via a Pi-dependent protein interaction. Suppresses the regulation on expression of PT2 by PHR2 and accumulation of shoot Pi. Optimizes growth under phosphate-limited conditions through a negative feedback loop of the PSI (phosphate starvation-induced) signaling pathway. Regulates the expression of SPX2, SPX3 and SPX5. May be an important link between signal transduction pathways related to phosphate starvation and cold stress. Together with SPX2, plays a negative role in the regulation of leaf inclination by preventing RLI1 transcription factor activity in Pi depleted conditions. The polypeptide is SPX domain-containing protein 1 (Oryza sativa subsp. indica (Rice)).